Reading from the N-terminus, the 323-residue chain is Isoeugenol synthase 1 (323 aa).

NADP(+) is bound by residues 14-17 (TGYL), 36-47 (VMPLKKNSDDSK), 88-90 (VPQ), 113-115 (SEF), lysine 135, and 155-157 (NSL). Lysine 135 (proton donor/acceptor) is an active-site residue.

This sequence belongs to the NmrA-type oxidoreductase family. In terms of tissue distribution, expressed in flowers, especially in corolla and tubes of petals, probably in both epidermal and mesophyll cell layers.

The catalysed reaction is (E)-isoeugenol + acetate + NADP(+) = (E)-coniferyl acetate + NADPH. It functions in the pathway aromatic compound metabolism; phenylpropanoid biosynthesis. With respect to regulation, inhibited by zinc and copper ions. Repressed by 4-bromo-cinnamyl acetate. In terms of biological role, involved in the biosynthesis of the floral volatile isoeugenol. Catalyzes the synthesis of the phenylpropene isoeugenol from coniferyl acetate. Phenylpropenes are the primary constituents of various essential plant oils. They are produced as antimicrobial and antianimal compounds, or as floral attractants of pollinators. Isoeugenol is a characteristic aromatic constituent of spices and a floral volatile compound. The polypeptide is Isoeugenol synthase 1 (Petunia hybrida (Petunia)).